The primary structure comprises 454 residues: Gastrin/cholecystokinin type B receptor (454 aa).

Residues M1–R57 are Extracellular-facing. N-linked (GlcNAc...) asparagine glycans are attached at residues N7, N30, and N36. A helical membrane pass occupies residues V58–L79. Residues G80–T87 lie on the Cytoplasmic side of the membrane. A helical transmembrane segment spans residues V88–P109. Over F110–S131 the chain is Extracellular. An intrachain disulfide couples C127 to C205. Residues Y132–L150 form a helical membrane-spanning segment. The Cytoplasmic portion of the chain corresponds to E151–H170. A helical membrane pass occupies residues A171–Y189. The Extracellular portion of the chain corresponds to P190–S219. Residues V220–S242 traverse the membrane as a helical segment. At R243–R340 the chain is on the cytoplasmic side. Residues S257–C284 are disordered. Residues S265 to Q275 show a composition bias toward gly residues. Residues M341–W362 traverse the membrane as a helical segment. Residues R363–S380 are Extracellular-facing. The helical transmembrane segment at F381–H401 threads the bilayer. At R402–G454 the chain is on the cytoplasmic side. A lipid anchor (S-palmitoyl cysteine) is attached at C415. The disordered stretch occupies residues A422 to S441.

The protein belongs to the G-protein coupled receptor 1 family.

The protein localises to the cell membrane. Its function is as follows. Receptor for gastrin and cholecystokinin. The CCK-B receptors occur throughout the central nervous system where they modulate anxiety, analgesia, arousal, and neuroleptic activity. This receptor mediates its action by association with G proteins that activate a phosphatidylinositol-calcium second messenger system. The polypeptide is Gastrin/cholecystokinin type B receptor (CCKBR) (Bos taurus (Bovine)).